The primary structure comprises 356 residues: MEIHLESQEQEMKYQSQIWNQICGTVDTSVLRCAIQLGIFDAIHNSGKPMITLTELSSIVSSPSSSSIEPCNLYRLVRYLSQMDLISIGECLNEATVSLTGTSKLLLRNQEKSLIDWVLAIYCEMMVVVWHELSSSVSTPADEPPIFQKVHGKNALELAGEFPEWNDLINNAMTSDTSVTKPALIQGCGKILNGVTSLIDVGGGHGATMAYIVEAFPHIKGAVIDLPHVVEAAPERPGVEFISGDIFKSISNADAVLLKYVLHNWEDTECVNLLKRCKEAVPADKGKVIIMDLVIDDDDNSILTQAKLSLDLTVMNHGGGRERTKEDWRNLIEMSGFSRHEIIPISAMPSIIVAYP.

S-adenosyl-L-methionine is bound at residue methionine 173. Residue aspartate 176 participates in substrate binding. S-adenosyl-L-methionine contacts are provided by residues threonine 177, glycine 202, aspartate 225, 245–246 (DI), and lysine 259. 260-264 (YVLHN) lines the substrate pocket. Residue histidine 263 is the Proton acceptor of the active site.

Belongs to the class I-like SAM-binding methyltransferase superfamily. Cation-independent O-methyltransferase family. COMT subfamily.

The enzyme catalyses (S)-scoulerine + S-adenosyl-L-methionine = (S)-tetrahydrocolumbamine + S-adenosyl-L-homocysteine + H(+). Its pathway is alkaloid biosynthesis. Methyltransferase involved in the biosynthesis of the benzylisoquinoline alkaloid noscapine. Catalyzes the conversion of (S)-scoulerine to (S)-tetrahydrocolumbamine. The heterodimers OMT2B-SOMT3 and OMT2B-6OMT do not possess 3-O-acetyl-4'-O-demethylpapaveroxine 4'-O-methyltransferase activity. The polypeptide is Probable scoulerine-9-O-methyltransferase OMT2B (Papaver somniferum (Opium poppy)).